The sequence spans 525 residues: Acyl-lipid (9-3)-desaturase (525 aa).

The 75-residue stretch at 102–176 folds into the Cytochrome b5 heme-binding domain; sequence KSTHPLSEVA…LQDFYIGDVE (75 aa). H137 and H159 together coordinate heme. Residues 216–236 traverse the membrane as a helical segment; the sequence is VAIFAASIAIICWSKTISAVL. The Histidine box-1 motif lies at 254-258; the sequence is HDFLH. A helical transmembrane segment spans residues 266–286; the sequence is WLNEVVGYVIGNAVLGFSTGW. The short motif at 291-295 is the Histidine box-2 element; that stretch reads HNLHH. The next 3 membrane-spanning stretches (helical) occupy residues 340 to 360, 378 to 398, and 401 to 421; these read QHLF…FWSW, GTVL…LPGW, and LVWM…VFVL. Positions 462-466 match the Histidine box-3 motif; it reads QIEHH.

This sequence belongs to the fatty acid desaturase type 1 family.

Its subcellular location is the membrane. The catalysed reaction is (9Z,12Z,15Z)-octadecatrienoyl-containing glycerolipid + 2 Fe(II)-[cytochrome b5] + O2 + 2 H(+) = (6Z,9Z,12Z,15Z)-octadecatetraenoyl-containing glycerolipid + 2 Fe(III)-[cytochrome b5] + 2 H2O. It carries out the reaction a (9Z,12Z)-octadecadienoyl-containing glycerolipid + 2 Fe(II)-[cytochrome b5] + O2 + 2 H(+) = (6Z,9Z,12Z)-octadecatrienoyl-containing glycerolipid + 2 Fe(III)-[cytochrome b5] + 2 H2O. It participates in lipid metabolism; polyunsaturated fatty acid biosynthesis. Its function is as follows. Fatty acid desaturase able to introduce a delta(6)-double bond into delta(9)-unsaturated fatty-acid substrates. Can use both linoleic acid (18:2(9Z,12Z)) and alpha-linolenic acid (18:3(9Z,12Z,15Z)) as substrates. Required for the biosynthesis of arachidonic acid (20:4(5z,8Z,11Z,14Z)). The sequence is that of Acyl-lipid (9-3)-desaturase from Physcomitrium patens (Spreading-leaved earth moss).